An 89-amino-acid polypeptide reads, in one-letter code: Small ribosomal subunit protein uS15 (89 aa).

Belongs to the universal ribosomal protein uS15 family. In terms of assembly, part of the 30S ribosomal subunit. Forms a bridge to the 50S subunit in the 70S ribosome, contacting the 23S rRNA.

One of the primary rRNA binding proteins, it binds directly to 16S rRNA where it helps nucleate assembly of the platform of the 30S subunit by binding and bridging several RNA helices of the 16S rRNA. Its function is as follows. Forms an intersubunit bridge (bridge B4) with the 23S rRNA of the 50S subunit in the ribosome. The protein is Small ribosomal subunit protein uS15 of Lactiplantibacillus plantarum (strain ATCC BAA-793 / NCIMB 8826 / WCFS1) (Lactobacillus plantarum).